A 281-amino-acid chain; its full sequence is NADPH-dependent 7-cyano-7-deazaguanine reductase (281 aa).

Substrate is bound at residue isoleucine 81–serine 83. An NADPH-binding site is contributed by serine 83–lysine 84. Catalysis depends on cysteine 188, which acts as the Thioimide intermediate. The active-site Proton donor is the aspartate 195. Histidine 227–glutamate 228 serves as a coordination point for substrate. Arginine 256–glycine 257 lines the NADPH pocket.

Belongs to the GTP cyclohydrolase I family. QueF type 2 subfamily. In terms of assembly, homodimer.

It is found in the cytoplasm. It carries out the reaction 7-aminomethyl-7-carbaguanine + 2 NADP(+) = 7-cyano-7-deazaguanine + 2 NADPH + 3 H(+). Its pathway is tRNA modification; tRNA-queuosine biosynthesis. Catalyzes the NADPH-dependent reduction of 7-cyano-7-deazaguanine (preQ0) to 7-aminomethyl-7-deazaguanine (preQ1). This is NADPH-dependent 7-cyano-7-deazaguanine reductase from Paracidovorax citrulli (strain AAC00-1) (Acidovorax citrulli).